We begin with the raw amino-acid sequence, 182 residues long: Large ribosomal subunit protein uL6 (182 aa).

It belongs to the universal ribosomal protein uL6 family. As to quaternary structure, part of the 50S ribosomal subunit.

Its function is as follows. This protein binds to the 23S rRNA, and is important in its secondary structure. It is located near the subunit interface in the base of the L7/L12 stalk, and near the tRNA binding site of the peptidyltransferase center. This Methanococcus maripaludis (strain C6 / ATCC BAA-1332) protein is Large ribosomal subunit protein uL6.